Reading from the N-terminus, the 486-residue chain is N-succinylglutamate 5-semialdehyde dehydrogenase (486 aa).

221–226 (GSSATG) is an NAD(+) binding site. Catalysis depends on residues glutamate 244 and cysteine 278.

Belongs to the aldehyde dehydrogenase family. AstD subfamily.

It catalyses the reaction N-succinyl-L-glutamate 5-semialdehyde + NAD(+) + H2O = N-succinyl-L-glutamate + NADH + 2 H(+). It participates in amino-acid degradation; L-arginine degradation via AST pathway; L-glutamate and succinate from L-arginine: step 4/5. Functionally, catalyzes the NAD-dependent reduction of succinylglutamate semialdehyde into succinylglutamate. The sequence is that of N-succinylglutamate 5-semialdehyde dehydrogenase from Chromobacterium violaceum (strain ATCC 12472 / DSM 30191 / JCM 1249 / CCUG 213 / NBRC 12614 / NCIMB 9131 / NCTC 9757 / MK).